We begin with the raw amino-acid sequence, 309 residues long: Zinc finger CCCH domain-containing protein 31 (309 aa).

Positions 1 to 36 (MEGAGAARKRSRPDTANGGAAGGKRSRETESFQTGL) are disordered. 2 consecutive C3H1-type zinc fingers follow at residues 37 to 65 (SSKL…HFVP) and 103 to 131 (SGKT…HGER). The tract at residues 86 to 106 (ARAPMDHAAGGNSHPASSGKT) is disordered. A KH domain is found at 175-239 (SATAKISVDA…DQIKQASNMV (65 aa)). The tract at residues 249–273 (STPAKKPAGSAAGAAPAGRGGPGGR) is disordered. A compositionally biased stretch (low complexity) spans 251–265 (PAKKPAGSAAGAAPA). A C3H1-type 3 zinc finger spans residues 275 to 302 (NYKTKLCENFVKGTCTFGDRCHFAHGEN).

This chain is Zinc finger CCCH domain-containing protein 31, found in Oryza sativa subsp. japonica (Rice).